Reading from the N-terminus, the 257-residue chain is UPF0246 protein VCM66_2278 (257 aa).

The protein belongs to the UPF0246 family.

The sequence is that of UPF0246 protein VCM66_2278 from Vibrio cholerae serotype O1 (strain M66-2).